The sequence spans 494 residues: DEAD-box ATP-dependent RNA helicase 20 (494 aa).

Positions 1-20 are enriched in basic and acidic residues; sequence MSRFDGRAADPGSYRDRRSE. A disordered region spans residues 1 to 39; it reads MSRFDGRAADPGSYRDRRSEGAFGGGTRAFAPTSKADSA. Over residues 29 to 39 the composition is skewed to low complexity; it reads AFAPTSKADSA. The short motif at 91–119 is the Q motif element; sequence REFRDVGFPEYVLQEITKAGFVEPTPIQS. In terms of domain architecture, Helicase ATP-binding spans 122–297; it reads WPMALRGRDL…RNFLFDPYKV (176 aa). ATP is bound at residue 135–142; that stretch reads AETGSGKT. Positions 245 to 248 match the DEAD box motif; that stretch reads DEAD. In terms of domain architecture, Helicase C-terminal spans 325-470; that stretch reads KLVNLLEDIM…KVSPELANMG (146 aa). Residues 465–494 are disordered; sequence ELANMGRGAPPPSSGHRDRYRGYGGGRSWS.

It belongs to the DEAD box helicase family. DDX5/DBP2 subfamily.

The protein localises to the nucleus. The enzyme catalyses ATP + H2O = ADP + phosphate + H(+). In terms of biological role, ATP-dependent RNA helicase involved nonsense-mediated mRNA decay and ribosome biogenesis through rRNA processing. The polypeptide is DEAD-box ATP-dependent RNA helicase 20 (Oryza sativa subsp. japonica (Rice)).